The chain runs to 241 residues: Endodeoxyribonuclease NucC (241 aa).

Active-site residues include Asp-73, Glu-104, and Lys-106. 2 residues coordinate Mg(2+): Asp-73 and Glu-104.

This sequence belongs to the NucC endonuclease family. As to quaternary structure, self-oligomerizes. Forms homotrimers; in the presence of cAAA the trimers associate face-to-face to form homohexamers. The 2 cAAA-binding sites are on the exterior of the hexamer at the three-way junction, there are maximally 2 cyclic nucleotides per hexamer. Mg(2+) serves as cofactor.

With respect to regulation, activated by cAAA and to a lesser extent cAA and cAAG; cAAA and cAA are products of its cognate CD-NTase. Cyclic nucleotide binding causes hexamerization. Cyclic nucleotide binding causes a series of shifts that enclose the cAAA molecule, enable hexamer formation and juxtapose pairs of active sites to allow dsDNA cleavage. Effector DNase of a CBASS antivirus system. CBASS (cyclic oligonucleotide-based antiphage signaling system) provides immunity against bacteriophage. The CD-NTase protein synthesizes cyclic nucleotides in response to infection; these serve as specific second messenger signals. The signals activate a diverse range of effectors, leading to bacterial cell death and thus abortive phage infection. A type III-C(AAA) CBASS system. Its function is as follows. A cyclic nucleotide-activated dsDNase. In the presence of 3',3',3'-cyclic AMP-AMP-AMP (cAAA), and to a lesser extent 3',3',3'-cyclic AMP-AMP-GMP (cAAG) and cyclic-di-AMP (c-di-AMP), endonucleolytically degrades dsDNA. Binds one cAAA in a pocket on one surface of the trimer; cAAA binding promotes hexamerization, which is necessary for nuclease activation. Also binds c-diAMP or linear di-AMP with lower affinity. The nuclease digests dsDNA to about 50 bp lengths with a 2-base 3' overhang and a consensus recognition site of 5'-Axx|T-3'. DNA has been modeled to contact a pair of juxtaposed active sites (one from each layer of the hexamer), accounting for cleavage on both strands and the 2-base overhang. In terms of biological role, protects E.coli strain JP313 against bacteriophage lambda cI- infection. When the cdnC-cap7-cap6-nucC operon is transformed into a susceptible strain it confers bacteriophage immunity. Mutations in the sensor (Cap7 also called HORMA) or effector proteins (CdnC, NucC) but not the disassembly protein (Cap6 also called Trip13) no longer confer immunity. The presence of the intact operon leads to culture collapse and cell death which occurs before the phage has finished its replication cycle, thus protecting non-infected bacteria by aborting the phage infection and preventing its propagation. This Escherichia coli (strain MS 115-1) protein is Endodeoxyribonuclease NucC.